Reading from the N-terminus, the 176-residue chain is Crossover junction endodeoxyribonuclease RuvC (176 aa).

Residues aspartate 12, glutamate 72, and aspartate 144 contribute to the active site. Mg(2+) is bound by residues aspartate 12, glutamate 72, and aspartate 144.

This sequence belongs to the RuvC family. In terms of assembly, homodimer which binds Holliday junction (HJ) DNA. The HJ becomes 2-fold symmetrical on binding to RuvC with unstacked arms; it has a different conformation from HJ DNA in complex with RuvA. In the full resolvosome a probable DNA-RuvA(4)-RuvB(12)-RuvC(2) complex forms which resolves the HJ. Requires Mg(2+) as cofactor.

The protein resides in the cytoplasm. The enzyme catalyses Endonucleolytic cleavage at a junction such as a reciprocal single-stranded crossover between two homologous DNA duplexes (Holliday junction).. Functionally, the RuvA-RuvB-RuvC complex processes Holliday junction (HJ) DNA during genetic recombination and DNA repair. Endonuclease that resolves HJ intermediates. Cleaves cruciform DNA by making single-stranded nicks across the HJ at symmetrical positions within the homologous arms, yielding a 5'-phosphate and a 3'-hydroxyl group; requires a central core of homology in the junction. The consensus cleavage sequence is 5'-(A/T)TT(C/G)-3'. Cleavage occurs on the 3'-side of the TT dinucleotide at the point of strand exchange. HJ branch migration catalyzed by RuvA-RuvB allows RuvC to scan DNA until it finds its consensus sequence, where it cleaves and resolves the cruciform DNA. The protein is Crossover junction endodeoxyribonuclease RuvC of Methylocella silvestris (strain DSM 15510 / CIP 108128 / LMG 27833 / NCIMB 13906 / BL2).